Reading from the N-terminus, the 302-residue chain is N-acetylmuramic acid 6-phosphate etherase (302 aa).

An SIS domain is found at 57–220 (IADRFRSNGR…TTGAMIRIGK (164 aa)). The Proton donor role is filled by Glu85. Glu116 is a catalytic residue.

Belongs to the GCKR-like family. MurNAc-6-P etherase subfamily. Homodimer.

It carries out the reaction N-acetyl-D-muramate 6-phosphate + H2O = N-acetyl-D-glucosamine 6-phosphate + (R)-lactate. It participates in amino-sugar metabolism; N-acetylmuramate degradation. In terms of biological role, specifically catalyzes the cleavage of the D-lactyl ether substituent of MurNAc 6-phosphate, producing GlcNAc 6-phosphate and D-lactate. The polypeptide is N-acetylmuramic acid 6-phosphate etherase (Rhodopirellula baltica (strain DSM 10527 / NCIMB 13988 / SH1)).